The sequence spans 924 residues: DNA repair and recombination protein RDH54 (924 aa).

A compositionally biased stretch (basic and acidic residues) spans 1 to 10 (MQIPKYENKP). Disordered regions lie at residues 1–21 (MQIP…GSNK) and 155–183 (EALS…NDGG). Low complexity predominate over residues 168 to 178 (TTSTTETVPST). A Helicase ATP-binding domain is found at 299–487 (LENDSDISGC…FTIIDFINPG (189 aa)). 346 to 353 (IPLTGLCK) is a binding site for ATP. Positions 472-475 (NDLN) match the DEGH box motif. K615 participates in a covalent cross-link: Glycyl lysine isopeptide (Lys-Gly) (interchain with G-Cter in ubiquitin). The Helicase C-terminal domain occupies 631–790 (KLKVLMTLLE…DSEMRNKESS (160 aa)).

This sequence belongs to the SNF2/RAD54 helicase family. Interacts with RAD51 and DMC1.

Its subcellular location is the nucleus. The catalysed reaction is ATP + H2O = ADP + phosphate + H(+). Its function is as follows. Involved in the recombinational repair of double-strand breaks (DSB) in DNA during mitosis and meiosis. Has DNA dependent ATPase activity. Promotes D-loop (displacement loop) formation with RAD51 recombinase. Modifies the topology of double-stranded DNA during the D-loop reaction to facilitate the invasion of the homologous duplex molecule by the initiating single-stranded DNA substrate. Required for adaptation from G2/M checkpoint arrest induced by a double strand break, by participating in monitoring the extent of single-stranded DNA produced by resection of DNA ends. This role is distinct from its roles in recombination. Promotes colocalization of RAD51 and DMC1 during meiotic recombination. Involved in crossover interference. The polypeptide is DNA repair and recombination protein RDH54 (RDH54) (Saccharomyces cerevisiae (strain JAY291) (Baker's yeast)).